We begin with the raw amino-acid sequence, 314 residues long: Olfactory receptor 1E16 (314 aa).

Residues 1 to 29 (MTERNKTVISQFLLLGLPIPPEHQQLFYA) lie on the Extracellular side of the membrane. Asn5 is a glycosylation site (N-linked (GlcNAc...) asparagine). A helical transmembrane segment spans residues 30-50 (LFLVMYLTTVLGNLIIIILII). Topologically, residues 51 to 57 (LDSHLHT) are cytoplasmic. A helical membrane pass occupies residues 58–78 (PMYLFLSNLSFSDLCFSSVTM). The Extracellular segment spans residues 79 to 97 (PKLLQNMQSQVPSIPYAGC). The cysteines at positions 97 and 179 are disulfide-linked. The helical transmembrane segment at 98–118 (LAQIYFFLFFGDLGNFLLVAM) threads the bilayer. The Cytoplasmic portion of the chain corresponds to 119–143 (AYDRYVAICYPLHYTTIMSPRLCVS). The helical transmembrane segment at 144 to 164 (LVVLSWVLTTFHAMLHTLLMA) threads the bilayer. Residues 165 to 196 (RLSFCEDNVIPHYFCDMSALLKLACSDTRVNE) are Extracellular-facing. The chain crosses the membrane as a helical span at residues 197–217 (VVIFIVASIFLVLPFALITMS). The Cytoplasmic portion of the chain corresponds to 218-239 (YVRIVSSILKVPSSQGIYKAFS). A helical membrane pass occupies residues 240–260 (TCGSHLSVVSLFYGTVIGLYL). Topologically, residues 261–271 (SPSSNNSTVKD) are extracellular. N-linked (GlcNAc...) asparagine glycans are attached at residues Asn265 and Asn266. The chain crosses the membrane as a helical span at residues 272-292 (TVMSLMYTVVTPMLNPFIYSL). Residues 293-314 (RNRDIKGALERVFCKRKIQLNL) lie on the Cytoplasmic side of the membrane.

This sequence belongs to the G-protein coupled receptor 1 family. In terms of tissue distribution, olfactory epithelium.

It is found in the cell membrane. Functionally, odorant receptor. Activated by a lily-derived aldehyde as well as other odorants. May signal through an inositol 1,4,5-trisphosphate (IP3) second messenger system. This Mus musculus (Mouse) protein is Olfactory receptor 1E16.